The sequence spans 433 residues: Adenylosuccinate synthetase (433 aa).

Residues G18 to K24 and G46 to T48 each bind GTP. The Proton acceptor role is filled by D19. D19 and G46 together coordinate Mg(2+). Residues D19–K22, N44–H47, T136, R150, Q229, T244, and R308 contribute to the IMP site. Catalysis depends on H47, which acts as the Proton donor. Position 304–310 (V304–R310) interacts with substrate. Residues R310, K336 to D338, and G420 to G422 contribute to the GTP site.

The protein belongs to the adenylosuccinate synthetase family. In terms of assembly, homodimer. Requires Mg(2+) as cofactor.

The protein resides in the cytoplasm. It catalyses the reaction IMP + L-aspartate + GTP = N(6)-(1,2-dicarboxyethyl)-AMP + GDP + phosphate + 2 H(+). The protein operates within purine metabolism; AMP biosynthesis via de novo pathway; AMP from IMP: step 1/2. In terms of biological role, plays an important role in the de novo pathway and in the salvage pathway of purine nucleotide biosynthesis. Catalyzes the first committed step in the biosynthesis of AMP from IMP. This is Adenylosuccinate synthetase from Schistosoma japonicum (Blood fluke).